Reading from the N-terminus, the 103-residue chain is N(4)-acetylcytidine amidohydrolase (103 aa).

The 89-residue stretch at 6 to 94 (ITFFQRFQND…IAEIYPNQTQ (89 aa)) folds into the ASCH domain. Lys-21 functions as the Proton acceptor in the catalytic mechanism. Residue Thr-24 is the Nucleophile of the active site. The Proton donor role is filled by Glu-74.

Belongs to the N(4)-acetylcytidine amidohydrolase family.

It carries out the reaction N(4)-acetylcytidine + H2O = cytidine + acetate + H(+). It catalyses the reaction N(4)-acetyl-2'-deoxycytidine + H2O = 2'-deoxycytidine + acetate + H(+). The catalysed reaction is N(4)-acetylcytosine + H2O = cytosine + acetate + H(+). Its function is as follows. Catalyzes the hydrolysis of N(4)-acetylcytidine (ac4C). In Salmonella heidelberg (strain SL476), this protein is N(4)-acetylcytidine amidohydrolase (yqfB).